The chain runs to 219 residues: Ribose-5-phosphate isomerase A (219 aa).

Substrate contacts are provided by residues 28–31, 81–84, and 94–97; these read SGST, DGAD, and KGGG. Glu103 (proton acceptor) is an active-site residue. Lys121 provides a ligand contact to substrate.

The protein belongs to the ribose 5-phosphate isomerase family. Homodimer.

It catalyses the reaction aldehydo-D-ribose 5-phosphate = D-ribulose 5-phosphate. The protein operates within carbohydrate degradation; pentose phosphate pathway; D-ribose 5-phosphate from D-ribulose 5-phosphate (non-oxidative stage): step 1/1. Its function is as follows. Catalyzes the reversible conversion of ribose-5-phosphate to ribulose 5-phosphate. The chain is Ribose-5-phosphate isomerase A from Glaesserella parasuis serovar 5 (strain SH0165) (Haemophilus parasuis).